We begin with the raw amino-acid sequence, 264 residues long: MQPYLDLMRHVLDNGNDKSDRTGTGTRSVFGWQMRFDLSQGFPVMTTKKLHLKSIIHELLWFIQGDTNIKYLQENGVKIWDEWADENGDLGPVYGKQWRRWETPDGRVIDQITQLVNSLKNNPDSRRHIVSAWNPGDVDNMALPPCHCLFQFYVANGKLSCQLYQRSADIFLGVPFNIASYALFTMMLAQVCGYQPGEFVHTFGDAHLYSNHFEQAKLQLSRDTRPLPTMWINPEVKDLFAFRFEDFRLEGYDPHPHIPAPVAV.

Position 21 (arginine 21) interacts with dUMP. Position 51 (histidine 51) interacts with (6R)-5,10-methylene-5,6,7,8-tetrahydrofolate. 126–127 contacts dUMP; sequence RR. Cysteine 146 acts as the Nucleophile in catalysis. DUMP is bound by residues 166 to 169, asparagine 177, and 207 to 209; these read RSAD and HLY. Aspartate 169 is a (6R)-5,10-methylene-5,6,7,8-tetrahydrofolate binding site. Alanine 263 provides a ligand contact to (6R)-5,10-methylene-5,6,7,8-tetrahydrofolate.

This sequence belongs to the thymidylate synthase family. Bacterial-type ThyA subfamily. In terms of assembly, homodimer.

It localises to the cytoplasm. It catalyses the reaction dUMP + (6R)-5,10-methylene-5,6,7,8-tetrahydrofolate = 7,8-dihydrofolate + dTMP. Its pathway is pyrimidine metabolism; dTTP biosynthesis. Catalyzes the reductive methylation of 2'-deoxyuridine-5'-monophosphate (dUMP) to 2'-deoxythymidine-5'-monophosphate (dTMP) while utilizing 5,10-methylenetetrahydrofolate (mTHF) as the methyl donor and reductant in the reaction, yielding dihydrofolate (DHF) as a by-product. This enzymatic reaction provides an intracellular de novo source of dTMP, an essential precursor for DNA biosynthesis. This Dechloromonas aromatica (strain RCB) protein is Thymidylate synthase.